Here is a 301-residue protein sequence, read N- to C-terminus: Homoserine O-acetyltransferase (301 aa).

Residue Cys-142 is the Acyl-thioester intermediate of the active site. Substrate is bound by residues Lys-163 and Ser-192. Catalysis depends on His-235, which acts as the Proton acceptor. The active site involves Glu-237. Residue Arg-249 coordinates substrate.

It belongs to the MetA family. As to quaternary structure, homodimer.

Its subcellular location is the cytoplasm. The enzyme catalyses L-homoserine + acetyl-CoA = O-acetyl-L-homoserine + CoA. Its pathway is amino-acid biosynthesis; L-methionine biosynthesis via de novo pathway; O-acetyl-L-homoserine from L-homoserine: step 1/1. Functionally, transfers an acetyl group from acetyl-CoA to L-homoserine, forming acetyl-L-homoserine. Utilizes a ping-pong kinetic mechanism in which the acetyl group of acetyl-CoA is initially transferred to the enzyme to form an acetyl-enzyme intermediate before subsequent transfer to homoserine to form the final product, O-acetylhomoserine. Cannot use succinyl-CoA as the acyl donor. This Bacillus cereus (strain ATCC 10987 / NRS 248) protein is Homoserine O-acetyltransferase.